We begin with the raw amino-acid sequence, 185 residues long: ATP synthase subunit delta (185 aa).

Belongs to the ATPase delta chain family. As to quaternary structure, F-type ATPases have 2 components, F(1) - the catalytic core - and F(0) - the membrane proton channel. F(1) has five subunits: alpha(3), beta(3), gamma(1), delta(1), epsilon(1). CF(0) has four main subunits: a(1), b(1), b'(1) and c(10-14). The alpha and beta chains form an alternating ring which encloses part of the gamma chain. F(1) is attached to F(0) by a central stalk formed by the gamma and epsilon chains, while a peripheral stalk is formed by the delta, b and b' chains.

It is found in the cellular thylakoid membrane. Functionally, f(1)F(0) ATP synthase produces ATP from ADP in the presence of a proton or sodium gradient. F-type ATPases consist of two structural domains, F(1) containing the extramembraneous catalytic core and F(0) containing the membrane proton channel, linked together by a central stalk and a peripheral stalk. During catalysis, ATP synthesis in the catalytic domain of F(1) is coupled via a rotary mechanism of the central stalk subunits to proton translocation. This protein is part of the stalk that links CF(0) to CF(1). It either transmits conformational changes from CF(0) to CF(1) or is implicated in proton conduction. This Synechocystis sp. (strain ATCC 27184 / PCC 6803 / Kazusa) protein is ATP synthase subunit delta.